We begin with the raw amino-acid sequence, 631 residues long: ATP-dependent DNA helicase 2 subunit 1 (631 aa).

The Ku domain occupies 262 to 487; the sequence is FYLGPNLSMS…VEFFQKIIKK (226 aa). Positions 550–570 are disordered; it reads AEPHKKRAAKSTTAGASGPKM.

The protein belongs to the ku70 family. Heterodimer of a 70 kDa and a 80 kDa subunit.

The protein localises to the nucleus. It localises to the chromosome. The catalysed reaction is ATP + H2O = ADP + phosphate + H(+). Functionally, single-stranded DNA-dependent ATP-dependent helicase. Involved in non-homologous end joining (NHEJ) DNA double strand break repair. Sequence-specific DNA-binding protein that has a high affinity for a 31 bp sequence in the Yp1 gene. Site-specific DNA binding to 31 bp P element inverted repeats. This is ATP-dependent DNA helicase 2 subunit 1 (Irbp) from Drosophila melanogaster (Fruit fly).